A 1517-amino-acid polypeptide reads, in one-letter code: Dual oxidase 2 (1517 aa).

An N-terminal signal peptide occupies residues 1 to 25 (MLPTSLKTLVLLGALLTGPLGPAGG). The Extracellular segment spans residues 26 to 599 (QDAPSLPREV…YFEGSGAGYG (574 aa)). A peroxidase-like; mediates peroxidase activity region spans residues 30 to 596 (SLPREVQRYD…VIDYFEGSGA (567 aa)). N-linked (GlcNAc...) asparagine glycans are attached at residues N100, N348, N455, and N537. C124 and C1131 are oxidised to a cystine. A helical membrane pass occupies residues 600–620 (VTLLAVCCFPVVSLIIAWVVA). Over 621–1010 (RFRNRERKML…KRFVENYRRH (390 aa)) the chain is Cytoplasmic. EF-hand domains are found at residues 819 to 854 (PQDM…FMKG), 855 to 890 (SPQD…FIEI), and 899 to 934 (QLAE…HDSD). The Ca(2+) site is built by D832, D834, N836, Y838, E843, D868, D870, N872, and E879. Residues 960 to 1214 (RVSFLTRTPG…GSYALIQLPS (255 aa)) form an interaction with TXNDC11 region. A helical transmembrane segment spans residues 1011–1031 (IVCVTIFSAICAGLFADRAYY). Residues 1032–1046 (YGFASPPTDIEETTY) are Extracellular-facing. The helical transmembrane segment at 1047–1067 (VGIILSRGTAASISFMFSYIL) threads the bilayer. The region spanning 1053–1235 (RGTAASISFM…YVGDKLVSLS (183 aa)) is the Ferric oxidoreductase domain. The Cytoplasmic portion of the chain corresponds to 1068–1100 (LTMCRNLITFLRETFLNRYIPFDAAVDFHRWIA). Residues 1101–1121 (MAAVVLAVVHSLGHAVNVYIF) traverse the membrane as a helical segment. At 1122 to 1154 (SVSPLSLMTCVFPSVFVNDGSKLPPKYYWWFFE) the chain is on the extracellular side. A helical transmembrane segment spans residues 1155–1175 (TVPGMTGVLLLLVLAIMYVFA). Over 1176-1185 (SHHFRRHSFR) the chain is Cytoplasmic. The helical transmembrane segment at 1186–1206 (GFWLTHHLYVVLYALIIIHGS) threads the bilayer. Position 1207 (Y1207) is a topological domain, extracellular. The helical transmembrane segment at 1208–1228 (ALIQLPSFHIYFLVPAIIYVG) threads the bilayer. Over 1229–1517 (DKLVSLSRKK…AHFVHHYENF (289 aa)) the chain is Cytoplasmic. In terms of domain architecture, FAD-binding FR-type spans 1236–1342 (RKKVEISVVK…DGPFGEGHQE (107 aa)).

The protein in the N-terminal section; belongs to the peroxidase family. In terms of assembly, heterodimer with DUOXA2; disulfide-linked. Interacts with TXNDC11, TPO and CYBA. N-glycosylated. As to expression, expressed in colon, duodenum, rectum and thyroid.

It is found in the apical cell membrane. The protein localises to the cell junction. It catalyses the reaction NADH + O2 + H(+) = H2O2 + NAD(+). It carries out the reaction NADPH + O2 + H(+) = H2O2 + NADP(+). The protein operates within hormone biosynthesis; thyroid hormone biosynthesis. The NADPH oxidase activity is calcium-dependent. Peroxidase activity is inhibited by aminobenzohydrazide. Functionally, generates hydrogen peroxide which is required for the activity of thyroid peroxidase/TPO and lactoperoxidase/LPO. Plays a role in thyroid hormones synthesis and lactoperoxidase-mediated antimicrobial defense at the surface of mucosa. May have its own peroxidase activity through its N-terminal peroxidase-like domain. The polypeptide is Dual oxidase 2 (Duox2) (Rattus norvegicus (Rat)).